A 275-amino-acid polypeptide reads, in one-letter code: 3-methyl-2-oxobutanoate hydroxymethyltransferase (275 aa).

2 residues coordinate Mg(2+): D44 and D83. 3-methyl-2-oxobutanoate contacts are provided by residues 44 to 45 (DS), D83, and K113. E115 contacts Mg(2+). Catalysis depends on E182, which acts as the Proton acceptor.

It belongs to the PanB family. In terms of assembly, homodecamer; pentamer of dimers. It depends on Mg(2+) as a cofactor.

The protein resides in the cytoplasm. The enzyme catalyses 3-methyl-2-oxobutanoate + (6R)-5,10-methylene-5,6,7,8-tetrahydrofolate + H2O = 2-dehydropantoate + (6S)-5,6,7,8-tetrahydrofolate. Its pathway is cofactor biosynthesis; (R)-pantothenate biosynthesis; (R)-pantoate from 3-methyl-2-oxobutanoate: step 1/2. Its function is as follows. Catalyzes the reversible reaction in which hydroxymethyl group from 5,10-methylenetetrahydrofolate is transferred onto alpha-ketoisovalerate to form ketopantoate. This Clostridium botulinum (strain 657 / Type Ba4) protein is 3-methyl-2-oxobutanoate hydroxymethyltransferase.